Consider the following 296-residue polypeptide: Putative thiosulfate sulfurtransferase SseA (296 aa).

Rhodanese domains follow at residues 31–138 and 168–286; these read GKPG…DTSL and ILGT…VPIT. The active-site Cysteine persulfide intermediate is the Cys245. Residue Arg250 coordinates substrate.

It catalyses the reaction thiosulfate + hydrogen cyanide = thiocyanate + sulfite + 2 H(+). This Mycobacterium leprae (strain TN) protein is Putative thiosulfate sulfurtransferase SseA (sseA).